We begin with the raw amino-acid sequence, 369 residues long: Geranylgeranyl pyrophosphate synthase, chloroplastic (369 aa).

The isopentenyl diphosphate site is built by lysine 118, arginine 121, and histidine 150. Mg(2+) is bound by residues aspartate 157 and aspartate 163. Residue arginine 168 participates in dimethylallyl diphosphate binding. Arginine 169 lines the isopentenyl diphosphate pocket. Dimethylallyl diphosphate-binding residues include lysine 254, threonine 255, glutamine 292, lysine 309, and lysine 319.

This sequence belongs to the FPP/GGPP synthase family. As to quaternary structure, monomer. Requires Mg(2+) as cofactor.

Its subcellular location is the plastid. It localises to the chloroplast. The catalysed reaction is isopentenyl diphosphate + dimethylallyl diphosphate = (2E)-geranyl diphosphate + diphosphate. The enzyme catalyses isopentenyl diphosphate + (2E)-geranyl diphosphate = (2E,6E)-farnesyl diphosphate + diphosphate. It catalyses the reaction isopentenyl diphosphate + (2E,6E)-farnesyl diphosphate = (2E,6E,10E)-geranylgeranyl diphosphate + diphosphate. It participates in isoprenoid biosynthesis; farnesyl diphosphate biosynthesis; farnesyl diphosphate from geranyl diphosphate and isopentenyl diphosphate: step 1/1. The protein operates within isoprenoid biosynthesis; geranyl diphosphate biosynthesis; geranyl diphosphate from dimethylallyl diphosphate and isopentenyl diphosphate: step 1/1. Its pathway is isoprenoid biosynthesis; geranylgeranyl diphosphate biosynthesis; geranylgeranyl diphosphate from farnesyl diphosphate and isopentenyl diphosphate: step 1/1. Functionally, catalyzes the trans-addition of the three molecules of IPP onto DMAPP to form geranylgeranyl pyrophosphate. This Capsicum annuum (Capsicum pepper) protein is Geranylgeranyl pyrophosphate synthase, chloroplastic.